A 156-amino-acid polypeptide reads, in one-letter code: 3-hydroxyacyl-[acyl-carrier-protein] dehydratase FabZ (156 aa).

H54 is a catalytic residue.

The protein belongs to the thioester dehydratase family. FabZ subfamily.

The protein resides in the cytoplasm. It carries out the reaction a (3R)-hydroxyacyl-[ACP] = a (2E)-enoyl-[ACP] + H2O. Its function is as follows. Involved in unsaturated fatty acids biosynthesis. Catalyzes the dehydration of short chain beta-hydroxyacyl-ACPs and long chain saturated and unsaturated beta-hydroxyacyl-ACPs. The chain is 3-hydroxyacyl-[acyl-carrier-protein] dehydratase FabZ from Koribacter versatilis (strain Ellin345).